Here is a 190-residue protein sequence, read N- to C-terminus: Nucleoside triphosphate pyrophosphatase (190 aa).

Aspartate 69 (proton acceptor) is an active-site residue.

This sequence belongs to the Maf family. The cofactor is a divalent metal cation.

Its subcellular location is the cytoplasm. It carries out the reaction a ribonucleoside 5'-triphosphate + H2O = a ribonucleoside 5'-phosphate + diphosphate + H(+). It catalyses the reaction a 2'-deoxyribonucleoside 5'-triphosphate + H2O = a 2'-deoxyribonucleoside 5'-phosphate + diphosphate + H(+). Functionally, nucleoside triphosphate pyrophosphatase. May have a dual role in cell division arrest and in preventing the incorporation of modified nucleotides into cellular nucleic acids. The protein is Nucleoside triphosphate pyrophosphatase of Helicobacter pylori (strain HPAG1).